Here is a 151-residue protein sequence, read N- to C-terminus: Ubiquitin-conjugating enzyme E2 2 (151 aa).

Residues 1–26 form a disordered region; it reads MSTSARRRLMRDFKRMQTDPPAGVSA. Positions 4 to 150 constitute a UBC core domain; it reads SARRRLMRDF…VRETVEKSWE (147 aa). Residue C88 is the Glycyl thioester intermediate of the active site.

The protein belongs to the ubiquitin-conjugating enzyme family.

The protein resides in the cytoplasm. It is found in the nucleus. The catalysed reaction is S-ubiquitinyl-[E1 ubiquitin-activating enzyme]-L-cysteine + [E2 ubiquitin-conjugating enzyme]-L-cysteine = [E1 ubiquitin-activating enzyme]-L-cysteine + S-ubiquitinyl-[E2 ubiquitin-conjugating enzyme]-L-cysteine.. It functions in the pathway protein modification; protein ubiquitination. In terms of biological role, catalyzes the covalent attachment of ubiquitin to other proteins. Plays a role in transcription regulation by catalyzing the monoubiquitination of histone H2B to form H2BK123ub1. H2BK123ub1 gives a specific tag for epigenetic transcriptional activation and is also a prerequisite for H3K4me and H3K79me formation. Also involved in postreplication repair of UV-damaged DNA, in N-end rule-dependent protein degradation and in sporulation. This is Ubiquitin-conjugating enzyme E2 2 (ubc2) from Aspergillus fumigatus (strain ATCC MYA-4609 / CBS 101355 / FGSC A1100 / Af293) (Neosartorya fumigata).